The sequence spans 536 residues: Quinate permease (536 aa).

Residues 1-26 (MTLLALKEDRPTPKAVYNWRVYTCAA) lie on the Cytoplasmic side of the membrane. Residues 27 to 47 (IASFASCMIGYDSSFIGTTLA) form a helical membrane-spanning segment. The Extracellular segment spans residues 48–74 (LPSFTKEFDFASYTPGALALLQSNIVS). Residues 75–95 (VYQAGAFFGSLFAFATSYFLG) form a helical membrane-spanning segment. Over 96-98 (RRR) the chain is Cytoplasmic. The helical transmembrane segment at 99 to 119 (SLIAFSVVFIIGAAIMLAADG) threads the bilayer. At 120-131 (QRRGVDPIIAGR) the chain is on the extracellular side. Residues 132-152 (VLAGIGVGGASNMVPIYISEL) form a helical membrane-spanning segment. Over 153–160 (APPAVRGR) the chain is Cytoplasmic. Residues 161-181 (LVGIYELGWQIGGLVGFWINY) traverse the membrane as a helical segment. Residues 182–195 (GVNTTMAPTRSQWL) are Extracellular-facing. Asn184 carries an N-linked (GlcNAc...) asparagine glycan. Residues 196–216 (IPFAVQLIPAGLLFLGSFWIP) form a helical membrane-spanning segment. The Cytoplasmic segment spans residues 217–285 (ESPRWLFANG…SLKQPKVRWR (69 aa)). Residues 286-306 (FFLGGMLFLWQNGSGINAINY) form a helical membrane-spanning segment. The Extracellular segment spans residues 307–327 (YSPTVFRSIGITGTNTGFLTT). The chain crosses the membrane as a helical span at residues 328–349 (GIFGVVKMVLTIIWLLWLVDLV). The Cytoplasmic portion of the chain corresponds to 350 to 352 (GRR). Residues 353 to 373 (RILFVGATGGSLCMWFIGAYI) form a helical membrane-spanning segment. Residues 374–389 (KIAGPGTTKTEEAKLT) are Extracellular-facing. Residues 390-410 (SGGIAAIFFFYLWTAFYTPSW) form a helical membrane-spanning segment. Residues 411–435 (NGTPWVINSEMFDQNTRSLGQASAA) lie on the Cytoplasmic side of the membrane. The helical transmembrane segment at 436-456 (ANNWFWNFIISRFTPQMFIKM) threads the bilayer. Over 457 to 458 (EY) the chain is Extracellular. A helical transmembrane segment spans residues 459 to 479 (GVYFFFASLMLLSVVFIYFFI). At 480–536 (PETKSIPLEAMDRLFAIKSVHNANKILMDELNFDRNPEREQSSLDEKDRVTQTENAV) the chain is on the cytoplasmic side. Positions 516-530 (PEREQSSLDEKDRVT) are enriched in basic and acidic residues. Residues 516 to 536 (PEREQSSLDEKDRVTQTENAV) form a disordered region.

This sequence belongs to the major facilitator superfamily. Sugar transporter (TC 2.A.1.1) family.

It localises to the membrane. This Neurospora africana protein is Quinate permease (qa-y).